The sequence spans 435 residues: 5-methylthioadenosine/S-adenosylhomocysteine deaminase (435 aa).

Residues H65 and H67 each contribute to the Zn(2+) site. The substrate site is built by E94, R150, and H189. H216 contributes to the Zn(2+) binding site. Residues E219 and D304 each contribute to the substrate site. Position 304 (D304) interacts with Zn(2+).

Belongs to the metallo-dependent hydrolases superfamily. MTA/SAH deaminase family. It depends on Zn(2+) as a cofactor.

It catalyses the reaction S-adenosyl-L-homocysteine + H2O + H(+) = S-inosyl-L-homocysteine + NH4(+). It carries out the reaction S-methyl-5'-thioadenosine + H2O + H(+) = S-methyl-5'-thioinosine + NH4(+). Catalyzes the deamination of 5-methylthioadenosine and S-adenosyl-L-homocysteine into 5-methylthioinosine and S-inosyl-L-homocysteine, respectively. Is also able to deaminate adenosine. The polypeptide is 5-methylthioadenosine/S-adenosylhomocysteine deaminase (Bacillus cereus (strain 03BB102)).